Consider the following 120-residue polypeptide: Putative pterin-4-alpha-carbinolamine dehydratase (120 aa).

It belongs to the pterin-4-alpha-carbinolamine dehydratase family.

The enzyme catalyses (4aS,6R)-4a-hydroxy-L-erythro-5,6,7,8-tetrahydrobiopterin = (6R)-L-erythro-6,7-dihydrobiopterin + H2O. The polypeptide is Putative pterin-4-alpha-carbinolamine dehydratase (Bdellovibrio bacteriovorus (strain ATCC 15356 / DSM 50701 / NCIMB 9529 / HD100)).